The chain runs to 132 residues: Agouti-signaling protein (132 aa).

A signal peptide spans 1-22 (MDVTRLLLATLLVFLCFFTAYS). Asn-39 carries N-linked (GlcNAc...) asparagine glycosylation. Residues 61–87 (QISRKEAEKKRSSKKEASMKKVARPRT) form a disordered region. The span at 63 to 79 (SRKEAEKKRSSKKEASM) shows a compositional bias: basic and acidic residues. 5 cysteine pairs are disulfide-bonded: Cys-93-Cys-108, Cys-100-Cys-114, Cys-107-Cys-125, Cys-111-Cys-132, and Cys-116-Cys-123. In terms of domain architecture, Agouti spans 93-132 (CVATRDSCKPPAPACCDPCASCQCRFFRSACSCRVLSLNC).

Its subcellular location is the secreted. Functionally, involved in the regulation of melanogenesis. The binding of ASP to MC1R precludes alpha-MSH initiated signaling and thus blocks production of cAMP, leading to a down-regulation of eumelanogenesis (brown/black pigment) and thus increasing synthesis of pheomelanin (yellow/red pigment). The polypeptide is Agouti-signaling protein (ASIP) (Macaca maura (Moor macaque)).